Consider the following 172-residue polypeptide: Small ribosomal subunit protein uS5 (172 aa).

The S5 DRBM domain occupies leucine 17–valine 80.

Belongs to the universal ribosomal protein uS5 family. In terms of assembly, part of the 30S ribosomal subunit. Contacts proteins S4 and S8.

With S4 and S12 plays an important role in translational accuracy. Its function is as follows. Located at the back of the 30S subunit body where it stabilizes the conformation of the head with respect to the body. The protein is Small ribosomal subunit protein uS5 of Burkholderia orbicola (strain AU 1054).